Here is a 118-residue protein sequence, read N- to C-terminus: Ribosome-binding factor A (118 aa).

It belongs to the RbfA family. Monomer. Binds 30S ribosomal subunits, but not 50S ribosomal subunits or 70S ribosomes.

Its subcellular location is the cytoplasm. Functionally, one of several proteins that assist in the late maturation steps of the functional core of the 30S ribosomal subunit. Associates with free 30S ribosomal subunits (but not with 30S subunits that are part of 70S ribosomes or polysomes). Required for efficient processing of 16S rRNA. May interact with the 5'-terminal helix region of 16S rRNA. The sequence is that of Ribosome-binding factor A from Bacillus cereus (strain ATCC 10987 / NRS 248).